The primary structure comprises 548 residues: MNNNQFHELFGSQWPPDQHGGHSSASTMLHQQTMPQTMQLKREPHTEVGVMHNQMGMDITSGSVADSTSPPPGSSEGMFGPISGMFMDKKAANSIRAQIEIIPCKVCGDKSSGVHYGVITCEGCKGFFRRSQSTVVNYQCPRNKACVVDRVNRNRCQYCRLQKCLKLGMSRDAVKFGRMSKKQREKVEDEVRYHKAQMRAQNDAAPDSVYDAQQQTPSSSDQFHGHYNGYPGYASPLSSYGYNNAGPPLTSNMSSIQAQPQAQQPYDYADSTTTYEPKQPGYLDADFIGQVEGDISKVLVKSLAERHANTNPKLEYINEMFSKPQDVSKLLFYNSMTYEEMWLDCADKLTAMIQNIIEFAKLIPGFMKLTQDDQILLLKSGSFELAIVRLSRLIDVNREQVLYGDVVLPIRECVHARDPRDMALVSGIFEAAKSIARLKLTESELALYQSLVLLWPERHGVMGNTEIRCLFNMSMSAMRHEIEANHAPLKGDVTVLDTLLAKIPTFRELSLMHLGALSRFKMTHPHHVFPALYKELFSLDSVLDYTHG.

A disordered region spans residues 1 to 27; sequence MNNNQFHELFGSQWPPDQHGGHSSAST. Positions 101 to 176 form a DNA-binding region, nuclear receptor; sequence IIPCKVCGDK…LGMSRDAVKF (76 aa). NR C4-type zinc fingers lie at residues 104 to 124 and 140 to 164; these read CKVCGDKSSGVHYGVITCEGC and CPRNKACVVDRVNRNRCQYCRLQKC. The interval 198 to 228 is disordered; it reads MRAQNDAAPDSVYDAQQQTPSSSDQFHGHYN. The segment covering 211–222 has biased composition (polar residues); sequence DAQQQTPSSSDQ. Residues 295 to 539 form the NR LBD domain; it reads ISKVLVKSLA…PALYKELFSL (245 aa).

It belongs to the nuclear hormone receptor family. NR1 subfamily.

The protein localises to the nucleus. In terms of biological role, putative receptor whose ligand is not yet known. This chain is Probable nuclear hormone receptor HR3 (HR3), found in Manduca sexta (Tobacco hawkmoth).